A 185-amino-acid polypeptide reads, in one-letter code: Threonylcarbamoyl-AMP synthase (185 aa).

The 182-residue stretch at 4-185 (SWRVQQAARE…LATGNIVRPA (182 aa)) folds into the YrdC-like domain.

The protein belongs to the SUA5 family. TsaC subfamily.

The protein localises to the cytoplasm. The enzyme catalyses L-threonine + hydrogencarbonate + ATP = L-threonylcarbamoyladenylate + diphosphate + H2O. Functionally, required for the formation of a threonylcarbamoyl group on adenosine at position 37 (t(6)A37) in tRNAs that read codons beginning with adenine. Catalyzes the conversion of L-threonine, HCO(3)(-)/CO(2) and ATP to give threonylcarbamoyl-AMP (TC-AMP) as the acyladenylate intermediate, with the release of diphosphate. The polypeptide is Threonylcarbamoyl-AMP synthase (Pseudomonas fluorescens (strain Pf0-1)).